A 1745-amino-acid chain; its full sequence is Collagen alpha-3(V) chain (1745 aa).

A signal peptide spans 1–29 (MGNRRDLGQPRAGLCLLLAALQLLPGTQA). The Laminin G-like domain maps to 62–224 (DRAFRIGQAS…QACERYLPDC (163 aa)). Asparagine 102 and asparagine 141 each carry an N-linked (GlcNAc...) asparagine glycan. The segment at 211 to 391 (QAAFQACERY…AVIEKGQQFE (181 aa)) is nonhelical region. Disordered regions lie at residues 230 to 304 (AATV…TPTP), 322 to 362 (RSLD…EYPS), 387 to 439 (GQQF…RGPP), and 476 to 1492 (SMKG…PAEL). Over residues 244 to 267 (PRRKGKGKGRKKGRGRKGKGRKKN) the composition is skewed to basic residues. Residue serine 349 is glycosylated (O-linked (Xyl...) (chondroitin sulfate) serine). 2 Collagen-like domains span residues 391 to 440 (EGPP…GPPG) and 482 to 538 (GPVG…DGAR). The tract at residues 392-1489 (GPPGAPGPQG…AGPPGPPGAP (1098 aa)) is triple-helical region. Positions 406 to 424 (SGPPGPPGFPGDPGPPGPA) are enriched in pro residues. 3 stretches are compositionally biased toward low complexity: residues 426–439 (LPGIPGIDGIRGPP), 489–499 (RPGPVGLPGHP), and 597–619 (EPGPRGLLGPRGSPGPTGRPGVT). The segment covering 724-733 (QGEKGEKGED) has biased composition (basic and acidic residues). The span at 765–792 (PKGQAGQAGEEGPPGSAGEKGKLGVPGL) shows a compositional bias: low complexity. Collagen-like domains follow at residues 824–877 (GQPG…QGPP), 905–950 (GFQG…GLPG), and 951–989 (LEGREGAKGELGPPGPLGKEGPAGLRGFPGPKGGPGDPG). Residues 967–979 (LGKEGPAGLRGFP) show a composition bias toward low complexity. Positions 1016–1025 (GPAGGIGLPG) are enriched in gly residues. 2 stretches are compositionally biased toward low complexity: residues 1116–1126 (ADGAQGRRGPP) and 1141–1152 (VGVIGPPGLQGL). The span at 1190–1199 (GLPGGVGQPG) shows a compositional bias: gly residues. Positions 1213-1222 (PGPPGAPGIP) are enriched in pro residues. Low complexity predominate over residues 1234-1243 (SGPSGAAGPP). Positions 1318 to 1330 (MGREGREGEKGAK) are enriched in basic and acidic residues. Low complexity predominate over residues 1405–1416 (IGLIGLIGPPGE). The segment covering 1429–1443 (QGPPGPKGDPGPPGP) has biased composition (pro residues). The Collagen-like 6 domain occupies 1430–1488 (GPPGPKGDPGPPGPIGSLGHPGPPGVAGPLGQKGSKGSPGSMGPRGDTGPAGPPGPPGA). A compositionally biased stretch (low complexity) spans 1458–1479 (PLGQKGSKGSPGSMGPRGDTGP). Residues 1514 to 1744 (EEVLASLTSL…GFELGPVCFS (231 aa)) form the Fibrillar collagen NC1 domain. 2 disulfide bridges follow: cysteine 1585/cysteine 1742 and cysteine 1651/cysteine 1696.

It belongs to the fibrillar collagen family. As to quaternary structure, trimers of two alpha 1(V) and one alpha 2(V) chains in most tissues and trimers of one alpha 1(V), one alpha 2(V), and one alpha 3(V) chains in placenta. In terms of processing, prolines at the third position of the tripeptide repeating unit (G-X-Y) are hydroxylated in some or all of the chains. In terms of tissue distribution, detected in fibroblasts (at protein level). Detected in urine (at protein level).

It localises to the secreted. Its subcellular location is the extracellular space. It is found in the extracellular matrix. Functionally, type V collagen is a member of group I collagen (fibrillar forming collagen). It is a minor connective tissue component of nearly ubiquitous distribution. Type V collagen binds to DNA, heparan sulfate, thrombospondin, heparin, and insulin. The chain is Collagen alpha-3(V) chain (COL5A3) from Homo sapiens (Human).